Reading from the N-terminus, the 1040-residue chain is Protocadherin-10 (1040 aa).

An N-terminal signal peptide occupies residues 1–18 (MIVLLLFALLWMVEGVFS). Cadherin domains are found at residues 19–122 (QLHY…PPSF), 123–250 (PEPD…VPAF), 251–358 (DQPV…APEI), 359–463 (SFST…APRF), 464–574 (SQPV…APAI), and 582–690 (NGTP…GGGG). Over 19–715 (QLHYTVQEEQ…GGGETSLDLT (697 aa)) the chain is Extracellular. Positions 207 to 223 (GGGGGVGEGGGGGGGAG) are enriched in gly residues. Residues 207–228 (GGGGGVGEGGGGGGGAGLPPQQ) form a disordered region. Residue Asn-273 is glycosylated (N-linked (GlcNAc...) asparagine). A glycan (N-linked (GlcNAc...) asparagine) is linked at Asn-557. A compositionally biased stretch (gly residues) spans 686–697 (QGGGGSGGGGSG). A disordered region spans residues 686–708 (QGGGGSGGGGSGEHQRPSRSGGG). A helical transmembrane segment spans residues 716 to 736 (LILIIALGSVSFIFLLAMIVL). The Cytoplasmic segment spans residues 737–1040 (AVRCQKEKKL…PPYLTRKRIC (304 aa)). Residues 899–927 (AFQEADIVSSKDSGHGDSEQGDSDHDATN) are disordered. A compositionally biased stretch (basic and acidic residues) spans 910 to 926 (DSGHGDSEQGDSDHDAT).

As to expression, moderately expressed in all regions of the brain examined, as well as in testis and ovary, and low expression in all other tissues tested.

It is found in the cell membrane. In terms of biological role, potential calcium-dependent cell-adhesion protein. Functionally, (Microbial infection) Acts as a receptor for Western equine encephalitis virus. The polypeptide is Protocadherin-10 (PCDH10) (Homo sapiens (Human)).